Reading from the N-terminus, the 395-residue chain is Zinc finger protein 385D (395 aa).

Matrin-type zinc fingers lie at residues 80–110, 204–234, and 267–297; these read ISCNICQLRFNSDSQAAAHYKGTKHAKKLKA, LYCSLCKVAVNSASQLEAHNSGTKHKTMLEA, and FHCEICDVHVNSETQLKQHISSRRHKDRASG. Residues 282–308 form a disordered region; sequence LKQHISSRRHKDRASGKPPKPKYSPYN.

It is found in the nucleus. This Rattus norvegicus (Rat) protein is Zinc finger protein 385D (Znf385d).